Consider the following 62-residue polypeptide: Venom peptide SjAPI-2 (62 aa).

5 cysteine pairs are disulfide-bonded: cysteine 4/cysteine 40, cysteine 14/cysteine 36, cysteine 18/cysteine 32, cysteine 22/cysteine 60, and cysteine 42/cysteine 54. In terms of domain architecture, TIL spans 4 to 60 (CRISGEVFTWCGTTCPLTCENFRNPPKHCPQGCFVGCMCRRGLVRHRNGRCVRPPRC).

This sequence belongs to the serine protease inhibitor-like (TIL domain-containing) family. In terms of tissue distribution, expressed by the venom gland.

It is found in the secreted. Serine protease inhibitor. The protein is Venom peptide SjAPI-2 of Scorpiops jendeki (Scorpion).